The chain runs to 173 residues: Shikimate kinase (173 aa).

ATP is bound at residue 10-15; the sequence is GSGKTT. Residue threonine 14 coordinates Mg(2+). 3 residues coordinate substrate: aspartate 32, arginine 56, and glycine 78. Arginine 117 contacts ATP. Position 135 (arginine 135) interacts with substrate.

This sequence belongs to the shikimate kinase family. In terms of assembly, monomer. The cofactor is Mg(2+).

Its subcellular location is the cytoplasm. It carries out the reaction shikimate + ATP = 3-phosphoshikimate + ADP + H(+). It functions in the pathway metabolic intermediate biosynthesis; chorismate biosynthesis; chorismate from D-erythrose 4-phosphate and phosphoenolpyruvate: step 5/7. Catalyzes the specific phosphorylation of the 3-hydroxyl group of shikimic acid using ATP as a cosubstrate. The sequence is that of Shikimate kinase from Limosilactobacillus fermentum (strain NBRC 3956 / LMG 18251) (Lactobacillus fermentum).